Reading from the N-terminus, the 495-residue chain is MASKRRNMSCSERHQKLVDENYCKKLHVQALKNINSQIRNRMVQNENDNRVERKQFLRLLQNEQFELDMEEAIQKAEENKRLKELLLKQEEKLAMELAKLKHESLKDEKMRQQVRENSIELRELEKKLKAAYMNKERAAQIAEKDAIKYEQMKRDAEIAKTMMEEHKRIIKEENAAEDKRNKVKAQYYLDLEKQLEEQEKKKQEAYEQLLKEKLMIDEIVRKIYEEDRLEKQQKLEKMNAMRRYIEEFQKEQALWRKKKREEMEEENRKIIEFANMQQQREEDRMAKVQENEEKRLQLQNALTQKLEEMLRQREDLEQVQQELYQEEQAEIYKRKLKEEAEKKLRKQKEMKQDFEEQMALKELVLQAAKEEEENFRKTMLAKFAEDDRIELMNAQKQRMKQLEHRRAVEKLIEERRQQFLADKQQELEEWQLQQRRQGFINAIIEEERLKLLKEHATNLLGYLPKGVFKKEDDIDLLGEEFRKVYQQRSEICEDK.

Residues 1 to 314 form an interaction with BBOF1 region; sequence MASKRRNMSC…KLEEMLRQRE (314 aa). Positions 59-410 form a coiled coil; that stretch reads LLQNEQFELD…QLEHRRAVEK (352 aa). Residue Tyr188 is modified to Phosphotyrosine.

It belongs to the MNS1 family. As to quaternary structure, able to form oligomers. Microtubule inner protein component of sperm flagellar doublet microtubules. Interacts with ODAD1. Interacts with BBOF1.

It is found in the nucleus. Its subcellular location is the cytoplasm. It localises to the cytoskeleton. The protein resides in the cilium axoneme. The protein localises to the flagellum axoneme. Microtubule inner protein (MIP) part of the dynein-decorated doublet microtubules (DMTs) in cilia axoneme, which is required for motile cilia beating. May play a role in the control of meiotic division and germ cell differentiation through regulation of pairing and recombination during meiosis. Required for sperm flagella assembly. May play a role in the assembly and function of the outer dynein arm-docking complex (ODA-DC). ODA-DC mediates outer dynein arms (ODA) binding onto the axonemal doublet microtubules. In Macaca fascicularis (Crab-eating macaque), this protein is Meiosis-specific nuclear structural protein 1 (MNS1).